A 437-amino-acid chain; its full sequence is Adenylosuccinate synthetase (437 aa).

GTP contacts are provided by residues Gly12–Lys18 and Gly40–Thr42. The active-site Proton acceptor is the Asp13. Positions 13 and 40 each coordinate Mg(2+). IMP contacts are provided by residues Asp13–Lys16, Asn38–His41, Thr128, Arg142, Gln223, Thr238, and Arg302. Residue His41 is the Proton donor of the active site. Residue Thr298–Arg304 coordinates substrate. GTP-binding positions include Arg304, Lys330–Asp332, and Ser412–Gly414.

It belongs to the adenylosuccinate synthetase family. In terms of assembly, homodimer. The cofactor is Mg(2+).

Its subcellular location is the cytoplasm. The catalysed reaction is IMP + L-aspartate + GTP = N(6)-(1,2-dicarboxyethyl)-AMP + GDP + phosphate + 2 H(+). It functions in the pathway purine metabolism; AMP biosynthesis via de novo pathway; AMP from IMP: step 1/2. In terms of biological role, plays an important role in the de novo pathway of purine nucleotide biosynthesis. Catalyzes the first committed step in the biosynthesis of AMP from IMP. This is Adenylosuccinate synthetase from Synechococcus sp. (strain RCC307).